The sequence spans 257 residues: Thiazole synthase (257 aa).

Residue Lys96 is the Schiff-base intermediate with DXP of the active site. 1-deoxy-D-xylulose 5-phosphate-binding positions include Gly157, 184 to 185, and 206 to 207; these read AG and NT.

The protein belongs to the ThiG family. As to quaternary structure, homotetramer. Forms heterodimers with either ThiH or ThiS.

Its subcellular location is the cytoplasm. It catalyses the reaction [ThiS sulfur-carrier protein]-C-terminal-Gly-aminoethanethioate + 2-iminoacetate + 1-deoxy-D-xylulose 5-phosphate = [ThiS sulfur-carrier protein]-C-terminal Gly-Gly + 2-[(2R,5Z)-2-carboxy-4-methylthiazol-5(2H)-ylidene]ethyl phosphate + 2 H2O + H(+). The protein operates within cofactor biosynthesis; thiamine diphosphate biosynthesis. Catalyzes the rearrangement of 1-deoxy-D-xylulose 5-phosphate (DXP) to produce the thiazole phosphate moiety of thiamine. Sulfur is provided by the thiocarboxylate moiety of the carrier protein ThiS. In vitro, sulfur can be provided by H(2)S. This Rhizobium etli (strain ATCC 51251 / DSM 11541 / JCM 21823 / NBRC 15573 / CFN 42) protein is Thiazole synthase.